The sequence spans 427 residues: 3-phosphoshikimate 1-carboxyvinyltransferase (427 aa).

3-phosphoshikimate is bound by residues Lys-22, Ser-23, and Arg-27. Lys-22 serves as a coordination point for phosphoenolpyruvate. Phosphoenolpyruvate contacts are provided by Gly-96 and Arg-124. The 3-phosphoshikimate site is built by Ser-169, Ser-170, Gln-171, Ser-197, Asp-313, Asn-336, and Lys-340. Residue Gln-171 participates in phosphoenolpyruvate binding. Catalysis depends on Asp-313, which acts as the Proton acceptor. Residues Arg-344, Arg-386, and Lys-411 each coordinate phosphoenolpyruvate.

Belongs to the EPSP synthase family. As to quaternary structure, monomer.

Its subcellular location is the cytoplasm. It carries out the reaction 3-phosphoshikimate + phosphoenolpyruvate = 5-O-(1-carboxyvinyl)-3-phosphoshikimate + phosphate. Its pathway is metabolic intermediate biosynthesis; chorismate biosynthesis; chorismate from D-erythrose 4-phosphate and phosphoenolpyruvate: step 6/7. Catalyzes the transfer of the enolpyruvyl moiety of phosphoenolpyruvate (PEP) to the 5-hydroxyl of shikimate-3-phosphate (S3P) to produce enolpyruvyl shikimate-3-phosphate and inorganic phosphate. The chain is 3-phosphoshikimate 1-carboxyvinyltransferase from Escherichia coli (strain SMS-3-5 / SECEC).